A 327-amino-acid polypeptide reads, in one-letter code: 2-oxoisovalerate dehydrogenase subunit beta (327 aa).

Residues E29, 58–60 (LAE), Q82, and 86–89 (FIMP) each bind thiamine diphosphate. Residues 83-86 (FADF) and H129 each bind substrate. H129 acts as the Proton acceptor in catalysis.

In terms of assembly, heterotetramer of two alpha and two beta chains. Directly associated with ODBA in the E1 complex. The cofactor is thiamine diphosphate.

It catalyses the reaction N(6)-[(R)-lipoyl]-L-lysyl-[protein] + 3-methyl-2-oxobutanoate + H(+) = N(6)-[(R)-S(8)-2-methylpropanoyldihydrolipoyl]-L-lysyl-[protein] + CO2. In terms of biological role, the branched-chain alpha-keto dehydrogenase complex catalyzes the overall conversion of alpha-keto acids to acyl-CoA and CO(2). It contains multiple copies of three enzymatic components: branched-chain alpha-keto acid decarboxylase (E1), lipoamide acyltransferase (E2) and lipoamide dehydrogenase (E3). The protein is 2-oxoisovalerate dehydrogenase subunit beta (bfmBAB) of Bacillus subtilis (strain 168).